Here is a 269-residue protein sequence, read N- to C-terminus: Protein TORNADO 2 (269 aa).

Over 1-10 the chain is Cytoplasmic; it reads MPLSNNVIGC. The chain crosses the membrane as a helical span at residues 11–31; that stretch reads INFITVLLSIPVIGAGIWLAI. The Extracellular segment spans residues 32-44; the sequence is GTVNSCVKLLQWP. A helical membrane pass occupies residues 45 to 65; the sequence is VIILGVLILLVGLAGFIGGFW. The Cytoplasmic segment spans residues 66–71; that stretch reads RITWLL. A helical membrane pass occupies residues 72 to 92; that stretch reads VVYLIAMLILIVLLGCLVGFI. The Extracellular portion of the chain corresponds to 93–231; that stretch reads YMVTIRGSGH…NIKVDWLKAD (139 aa). N200 carries an N-linked (GlcNAc...) asparagine glycan. Residues 232–252 traverse the membrane as a helical segment; the sequence is IFLLLALIGLIIVYIIGCCAF. Residues 253-269 lie on the Cytoplasmic side of the membrane; it reads RNAETEDIFRKYKQGYT.

Belongs to the tetraspanin (TM4SF) family. As to expression, expressed in seedlings, roots, leaves, stems, apex, siliques and flowers. Present in ovules, prominently in nucellus and integuments.

The protein localises to the membrane. In terms of biological role, involved in the basipetal transport of auxin (IAA) that modulates growth and organs organization, as well as cell differentiation. Regulates shoot apical meristem (SAM) organization in the peripheral zone. Required for initial meristematic divisions in the epidermal/lateral root cap leading to the formation of epidermal cells and a clone of lateral root cap cells, as well as for the maintenance of the radial pattern of cell specification in the root, thus regulating the distinction between the lateral root cap and epidermis. Together with WIH peptides, promotes megasporogenesis. This chain is Protein TORNADO 2 (TRN2), found in Arabidopsis thaliana (Mouse-ear cress).